Reading from the N-terminus, the 498-residue chain is O-methyltransferase OME1 (498 aa).

Residues 1–19 (MSTMALHRTASTKSDTTMA) show a composition bias toward polar residues. Disordered stretches follow at residues 1 to 23 (MSTM…CPNG) and 42 to 83 (HRAE…QPEY). Positions 50-65 (SSTSSVSTTPTSPSFS) are enriched in low complexity. S-adenosyl-L-methionine is bound at residue aspartate 358. Histidine 406 serves as the catalytic Proton acceptor.

It belongs to the class I-like SAM-binding methyltransferase superfamily. Cation-independent O-methyltransferase family.

Its pathway is secondary metabolite biosynthesis. Functionally, O-methyltransferase; part of the gene cluster that mediates the biosynthesis of a tyrosine-derived cytochalasan acting as a fungal signal recognized by resistant rice plants and leads to avirulence in Pi33 resistant rice cultivars. The first step in the pathway is catalyzed by the hybrid PKS-NRPS ACE1, assisted by the enoyl reductase RAP1, that are responsible for fusion of the tyrosine precursor and the polyketide backbone. The polyketide synthase module (PKS) of ACE1 is responsible for the synthesis of the polyketide backbone and the downstream nonribosomal peptide synthetase (NRPS) amidates the carboxyl end of the polyketide with the tyrosine precursor. Because ACE1 lacks a designated enoylreductase (ER) domain, the required activity is provided the enoyl reductase RAP1. Reduction by the hydrolyase ORFZ, followed by dehydration and intra-molecular Diels-Alder cyclization by the Diels-Alderase ORF3 then yield the required isoindolone-fused macrocycle. A number of oxidative steps catalyzed by the tailoring enzymes identified within the cluster, including cytochrome P450 monooxygenases CYP1 to CYP4, the FAD-linked oxidoreductase OXR2 and the short-chain dehydrogenase/reductase OXR1, are further required to afford the final cytochalasans that confer avirulence and which have still to be identified. The monooxygenase CYP1 has been shown to be a site-selective C-18 hydroxylase whereas the function of CYP3 is the site-selective epoxidation of the C-6/C-7 olefin that is present in some intermediate compounds. Finally, SYN2 and RAP2 are not required for avirulence in Pi33 resistant rice cultivars. The protein is O-methyltransferase OME1 of Pyricularia oryzae (strain 70-15 / ATCC MYA-4617 / FGSC 8958) (Rice blast fungus).